The following is a 184-amino-acid chain: Protein FAM89A (184 aa).

The interval 148-184 is disordered; that stretch reads YFQEQNSLHDRRDRGPPRDLSLPVSSLSSSDWILESI. A compositionally biased stretch (basic and acidic residues) spans 154–164; it reads SLHDRRDRGPP. Residues 167–184 are compositionally biased toward low complexity; that stretch reads LSLPVSSLSSSDWILESI.

This sequence belongs to the FAM89 family.

In Homo sapiens (Human), this protein is Protein FAM89A (FAM89A).